We begin with the raw amino-acid sequence, 287 residues long: ATP synthase gamma chain (287 aa).

Belongs to the ATPase gamma chain family. As to quaternary structure, F-type ATPases have 2 components, CF(1) - the catalytic core - and CF(0) - the membrane proton channel. CF(1) has five subunits: alpha(3), beta(3), gamma(1), delta(1), epsilon(1). CF(0) has three main subunits: a, b and c.

It is found in the cell inner membrane. Produces ATP from ADP in the presence of a proton gradient across the membrane. The gamma chain is believed to be important in regulating ATPase activity and the flow of protons through the CF(0) complex. The chain is ATP synthase gamma chain from Proteus mirabilis (strain HI4320).